A 728-amino-acid polypeptide reads, in one-letter code: Histone demethylase JHD2 (728 aa).

One can recognise a JmjN domain in the interval 4–47; sequence IPALYPTEQEFKNPIDYLSNPHIKRLGVRYGMVKVVPPNGFCPP. A PHD-type zinc finger spans residues 235-285; that stretch reads DDACIVCRKTNDPKRTILCDSCDKPFHIYCLSPPLERVPSGDWICNTCIVG. In terms of domain architecture, JmjC spans 381-549; the sequence is KYCDHPMNLT…YGFGAITDYK (169 aa). 3 residues coordinate Fe cation: His-427, Asp-430, and His-517.

Belongs to the JARID1 histone demethylase family. Requires Fe(2+) as cofactor.

It is found in the nucleus. The enzyme catalyses N(6),N(6),N(6)-trimethyl-L-lysyl(4)-[histone H3] + 3 2-oxoglutarate + 3 O2 = L-lysyl(4)-[histone H3] + 3 formaldehyde + 3 succinate + 3 CO2. In terms of biological role, histone demethylase that demethylates 'Lys-4' of histone H3, thereby playing a central role in histone code. Demethylates trimethylated H3 'Lys-4'. The polypeptide is Histone demethylase JHD2 (JHD2) (Saccharomyces cerevisiae (strain ATCC 204508 / S288c) (Baker's yeast)).